Here is a 428-residue protein sequence, read N- to C-terminus: Dihydroorotase (428 aa).

Zn(2+)-binding residues include His59 and His61. Residues His61–Arg63 and Asn93 each bind substrate. Zn(2+)-binding residues include Asp151, His178, and His231. Asn277 serves as a coordination point for substrate. Asp304 is a binding site for Zn(2+). The active site involves Asp304. Residues His308 and Phe322–Gly323 contribute to the substrate site.

The protein belongs to the metallo-dependent hydrolases superfamily. DHOase family. Class I DHOase subfamily. The cofactor is Zn(2+).

It carries out the reaction (S)-dihydroorotate + H2O = N-carbamoyl-L-aspartate + H(+). Its pathway is pyrimidine metabolism; UMP biosynthesis via de novo pathway; (S)-dihydroorotate from bicarbonate: step 3/3. In terms of biological role, catalyzes the reversible cyclization of carbamoyl aspartate to dihydroorotate. This chain is Dihydroorotase, found in Bacillus cytotoxicus (strain DSM 22905 / CIP 110041 / 391-98 / NVH 391-98).